The chain runs to 347 residues: GTPase Obg (347 aa).

The Obg domain maps to 1–159; that stretch reads MHFIDQAEIE…VRLRLELKLI (159 aa). Positions 160–328 constitute an OBG-type G domain; the sequence is AEVGIVGLPN…LLQRVWQCLG (169 aa). Residues 166–173, 191–195, 213–216, 280–283, and 309–311 contribute to the GTP site; these read GLPNAGKS, FTTLQ, DIPG, NKID, and SAI. The Mg(2+) site is built by S173 and T193.

It belongs to the TRAFAC class OBG-HflX-like GTPase superfamily. OBG GTPase family. In terms of assembly, monomer. Mg(2+) serves as cofactor.

It localises to the cytoplasm. An essential GTPase which binds GTP, GDP and possibly (p)ppGpp with moderate affinity, with high nucleotide exchange rates and a fairly low GTP hydrolysis rate. Plays a role in control of the cell cycle, stress response, ribosome biogenesis and in those bacteria that undergo differentiation, in morphogenesis control. The polypeptide is GTPase Obg (Synechococcus sp. (strain JA-2-3B'a(2-13)) (Cyanobacteria bacterium Yellowstone B-Prime)).